Consider the following 511-residue polypeptide: MKNNKIIIFDTTLRDGEQALGSSLGINQKLQIALALENLGVDVIEAGFPVSSQGDFKAVQKIASKVKNSTICALSRALDKDIDMAYEALKVAKHFRIHTFIATSTLHIQDKLKKDFDEILSMAKRAIIRARSYTDDVEFSCEDAGRTPIDNLCFMVENAIKAGAKTINIPDTVGYTLPSEFANIIKILFNKVPNIDKAIISVHCHNDLGMATGNSLSAILQGARQIECTINGLGERAGNCALEEVVMAIKTRKDYLQGFYTDIKCENISKTSKLVSAITNESIPSHKAIVGSNAFSHSSGIHQDGVLKNRQTYEIISPSAIGIHENRMLMTARSGRAMIKTCLENLGYDENTYNLDDVYERFLRLADKKGQVYDYDLEALMFLSYESEEENEFVLEKLSVISGNIPTACVCMRIKEELKTEACTGNGPVEAVFNCIARITNLKPVLKAYSINAKSSGVDAQGQVDVDLEFKGRKFHGKGLSTDVIEASAQAFVSAYNAIYRSLKVEERKMA.

Residues 6-269 (IIIFDTTLRD…YTDIKCENIS (264 aa)) enclose the Pyruvate carboxyltransferase domain. Mn(2+)-binding residues include aspartate 15, histidine 203, histidine 205, and asparagine 239. The tract at residues 394-511 (VLEKLSVISG…SLKVEERKMA (118 aa)) is regulatory domain.

Belongs to the alpha-IPM synthase/homocitrate synthase family. LeuA type 1 subfamily. In terms of assembly, homodimer. Mn(2+) is required as a cofactor.

The protein localises to the cytoplasm. The enzyme catalyses 3-methyl-2-oxobutanoate + acetyl-CoA + H2O = (2S)-2-isopropylmalate + CoA + H(+). Its pathway is amino-acid biosynthesis; L-leucine biosynthesis; L-leucine from 3-methyl-2-oxobutanoate: step 1/4. Its function is as follows. Catalyzes the condensation of the acetyl group of acetyl-CoA with 3-methyl-2-oxobutanoate (2-ketoisovalerate) to form 3-carboxy-3-hydroxy-4-methylpentanoate (2-isopropylmalate). The sequence is that of 2-isopropylmalate synthase from Campylobacter jejuni subsp. doylei (strain ATCC BAA-1458 / RM4099 / 269.97).